The following is a 464-amino-acid chain: Serine protease PepD (464 aa).

The disordered stretch occupies residues 1-71; sequence MAKLARVVGL…TQYRQPYEAL (71 aa). The Cytoplasmic segment spans residues 1-100; that stretch reads MAKLARVVGL…GMVRQRPRAG (100 aa). A compositionally biased stretch (low complexity) spans 39 to 48; that stretch reads QGQQQTYSQQ. Residues 101–121 form a helical membrane-spanning segment; the sequence is MLAIGAVTIAVVSAGIGGAAA. Over 122–464 the chain is Periplasmic; it reads SLVGFNRAPA…VQVTLGKAEQ (343 aa). Residues His197, Asp236, and Ser317 each act as charge relay system in the active site. One can recognise a PDZ domain in the interval 368 to 449; that stretch reads LISTGKASHA…TVALTFQDPS (82 aa).

This sequence belongs to the peptidase S1C family. In terms of assembly, homotrimer. Interacts with numerous proteins, including the 35 kDa antigen PspA.

Its subcellular location is the cell inner membrane. The protein resides in the secreted. It localises to the cell wall. The enzyme catalyses Acts on substrates that are at least partially unfolded. The cleavage site P1 residue is normally between a pair of hydrophobic residues, such as Val-|-Val.. Probably regulates its own activity by autocleavage, which removes the PDZ domain. Inhibited by the serine protease inhibitor diisopropylfluorophosphate (DFP). Inhibited by fluoroquinolone such as ciprofloxacin, moxifloxacin and ofloxacin and their analogs. In terms of biological role, required for virulence. Acts both as a protease, which degrades and/or refolds damaged substrate targets, and as a chaperone. Plays an important role in the stress response network mediated through the two-component regulatory system MprAB and SigE signaling networks. May utilize its PDZ domain to recognize and process misfolded proteins at the cell membrane, leading to activation of the MprAB and SigE signaling pathways and subsequent establishment of a positive feedback loop that facilitates bacterial adaptation. Interacts with and potentially cleaves several proteins, including the 35 kDa antigen PspA. Proteolytic cleavage of PspA may help to maintain cell envelope homeostasis in Mycobacterium and regulate specific stress response pathways during periods of extracytoplasmic stress. In vitro, exhibits proteolytic activity against the artificial substrate beta-casein. The sequence is that of Serine protease PepD from Mycobacterium tuberculosis (strain ATCC 25618 / H37Rv).